The chain runs to 392 residues: GPI alpha-1,4-mannosyltransferase I, catalytic subunit (392 aa).

Over M1–R4 the chain is Cytoplasmic. A helical transmembrane segment spans residues V5–Y25. Over Q26 to P65 the chain is Lumenal. A helical membrane pass occupies residues L66 to F86. The Cytoplasmic segment spans residues G87–M125. A helical membrane pass occupies residues A126 to L148. Over Q149–A156 the chain is Lumenal. The helical transmembrane segment at A157–I177 threads the bilayer. At A178 to P198 the chain is on the cytoplasmic side. A helical transmembrane segment spans residues A199 to Y219. The Lumenal portion of the chain corresponds to C220 to S261. Residues G262–F282 traverse the membrane as a helical segment. The Cytoplasmic portion of the chain corresponds to S283–R302. A helical transmembrane segment spans residues V303–L323. Over R324–G330 the chain is Lumenal. The chain crosses the membrane as a helical span at residues L331 to L351. The Cytoplasmic segment spans residues E352–S360. A helical membrane pass occupies residues W361–I381. Residues Q382–D392 lie on the Lumenal side of the membrane.

Belongs to the PIGM family. As to quaternary structure, part of the glycosylphosphatidylinositol-mannosyltransferase I complex that is composed of PIGM and PIGX.

The protein resides in the endoplasmic reticulum membrane. Its pathway is glycolipid biosynthesis; glycosylphosphatidylinositol-anchor biosynthesis. Catalytic subunit of the glycosylphosphatidylinositol-mannosyltransferase I complex which catalyzes the transfer of the first mannose, via an alpha-1,4 bond from a dolichol-phosphate-mannose (Dol-P-Man) to the glucosaminyl acyl phosphatidylinositol (GlcN-(acyl)PI) intermediate to generate alpha-D-Man-(1-&gt;4)-alpha-D-GlcN-(1-&gt;6)-(1-radyl,2-acyl-sn-glycero-3-phospho)-2-acyl-inositol and participates in the sixth step of the glycosylphosphatidylinositol-anchor biosynthesis. The polypeptide is GPI alpha-1,4-mannosyltransferase I, catalytic subunit (Danio rerio (Zebrafish)).